The following is a 637-amino-acid chain: ATP-dependent rRNA helicase SPB4 (637 aa).

Residues 14 to 42 (WDTLNPPLSEWIRDAVATMGFDQMTPVQA) carry the Q motif motif. Positions 45 to 247 (LPHFMGNKDV…RVGLRNPVKI (203 aa)) constitute a Helicase ATP-binding domain. 58 to 65 (AVTGSGKT) is a binding site for ATP. The DEAD box signature appears at 195–198 (DEAD). In terms of domain architecture, Helicase C-terminal spans 283 to 438 (ALAELLRQLP…TITTSEDDAA (156 aa)). Positions 524-631 (KEKTREQQRK…AAAKQEKDGE (108 aa)) form a coiled coil. Composition is skewed to basic and acidic residues over residues 535–553 (ALEE…EEFK), 563–576 (SAKH…VERR), 583–618 (RDAE…EKAA), and 625–637 (KQEK…GFDD). The segment at 535-637 (ALEEEKSGVK…KDGEFKGFDD (103 aa)) is disordered.

It belongs to the DEAD box helicase family. DDX55/SPB4 subfamily. Component of pre-60S ribosomal complexes.

It is found in the nucleus. The protein localises to the nucleolus. It catalyses the reaction ATP + H2O = ADP + phosphate + H(+). Its function is as follows. ATP-binding RNA helicase involved in the biogenesis of 60S ribosomal subunits. Binds 90S pre-ribosomal particles and dissociates from pre-60S ribosomal particles after processing of 27SB pre-rRNA. Required for the normal formation of 18S rRNA through the processing of pre-rRNAs at sites A0, A1 and A2, and the normal formation of 25S and 5.8S rRNAs through the processing of pre-rRNAs at sites C1 and C2. The polypeptide is ATP-dependent rRNA helicase SPB4 (Gibberella zeae (strain ATCC MYA-4620 / CBS 123657 / FGSC 9075 / NRRL 31084 / PH-1) (Wheat head blight fungus)).